A 169-amino-acid polypeptide reads, in one-letter code: Transcription antitermination protein NusB (169 aa).

The protein belongs to the NusB family.

Its function is as follows. Involved in transcription antitermination. Required for transcription of ribosomal RNA (rRNA) genes. Binds specifically to the boxA antiterminator sequence of the ribosomal RNA (rrn) operons. The sequence is that of Transcription antitermination protein NusB from Rhodococcus opacus (strain B4).